Consider the following 71-residue polypeptide: Small ribosomal subunit protein bS21 (71 aa).

Belongs to the bacterial ribosomal protein bS21 family.

This chain is Small ribosomal subunit protein bS21, found in Buchnera aphidicola subsp. Schizaphis graminum (strain Sg).